Here is a 91-residue protein sequence, read N- to C-terminus: Early E3B 10.4 kDa protein (91 aa).

Residues 1–22 (MIPRNFFFTILICAFNVCATFT) form the signal peptide. Residues 23–34 (AVATASPDCIGP) are Lumenal-facing. Residues 35 to 60 (FASYALFAFVTCICVCSIVCLVINFF) traverse the membrane as a helical segment. At 61 to 91 (QLVDWIFVRIAYLRHHPEYRNQNVAALLRLI) the chain is on the cytoplasmic side.

This sequence belongs to the adenoviridae E3B family.

Its subcellular location is the host endoplasmic reticulum membrane. Functionally, down-regulates the EGF receptor. The sequence is that of Early E3B 10.4 kDa protein from Homo sapiens (Human).